The sequence spans 469 residues: GTPase Der (469 aa).

EngA-type G domains follow at residues 3–166 (PVIA…PEDE) and 177–350 (LRLA…ESAN). GTP-binding positions include 9 to 16 (GRPNVGKS), 56 to 60 (DTGGI), 118 to 121 (NKVD), 183 to 190 (GRPNVGKS), 230 to 234 (DTAGV), and 295 to 298 (NKWD). Residues 351-435 (LKVSPAKLTQ…PVKIEFKTSE (85 aa)) enclose the KH-like domain.

It belongs to the TRAFAC class TrmE-Era-EngA-EngB-Septin-like GTPase superfamily. EngA (Der) GTPase family. Associates with the 50S ribosomal subunit.

Functionally, GTPase that plays an essential role in the late steps of ribosome biogenesis. In Acinetobacter baumannii (strain AB0057), this protein is GTPase Der.